The chain runs to 117 residues: Large ribosomal subunit protein bL17 (117 aa).

This sequence belongs to the bacterial ribosomal protein bL17 family. In terms of assembly, part of the 50S ribosomal subunit. Contacts protein L32.

This is Large ribosomal subunit protein bL17 from Dehalococcoides mccartyi (strain ATCC BAA-2100 / JCM 16839 / KCTC 5957 / BAV1).